The chain runs to 276 residues: Mitochondrial outer membrane protein porin 1 (276 aa).

The protein belongs to the eukaryotic mitochondrial porin (TC 1.B.8.1) family. Expressed in shoot meristems, root meristematic zone, lateral roots, leaves, stigma and anthers.

The protein localises to the mitochondrion outer membrane. Its function is as follows. Forms a channel through the mitochondrial outer membrane that allows diffusion of small hydrophilic molecules. The channel adopts an open conformation at low or zero membrane potential and a closed conformation at potentials above 30-40 mV. The open state has a weak anion selectivity whereas the closed state is cation-selective. Involved in plant development at reproductive stage, is important for pollen development and may regulate hydrogen peroxide generation during disease resistance. The protein is Mitochondrial outer membrane protein porin 1 (VDAC1) of Arabidopsis thaliana (Mouse-ear cress).